A 344-amino-acid chain; its full sequence is MNSITDVGGIRVGHYQRLDPDASLGAGWACGVTVVLPPPGTVGAVDCRGGAPGTRETDLLDPANSVRFVDALLLAGGSAYGLAAADGVMRWLEEHRRGVAMDSGVVPIVPGAVIFDLPVGGWNCRPTADFGYSACAAAGVDVAVGTVGVGVGARAGALKGGVGTASATLQSGVTVGVLAVVNAAGNVVDPATGLPWMADLVGEFALRAPPAEQIAALAQLSSPLGAFNTPFNTTIGVIACDAALSPAACRRIAIAAHDGLARTIRPAHTPLDGDTVFALATGAVAVPPEAGVPAALSPETQLVTAVGAAAADCLARAVLAGVLNAQPVAGIPTYRDMFPGAFGS.

Transmembrane regions (helical) follow at residues 25–45 (GAGW…VGAV), 68–88 (FVDA…ADGV), 104–124 (GVVP…GWNC), 133–153 (SACA…GVGA), 161–181 (GVGT…LAVV), 224–244 (LGAF…DAAL), 276–296 (VFAL…PAAL), and 302–322 (LVTA…LAGV).

Belongs to the peptidase S58 family.

The protein localises to the cell membrane. Aminopeptidase. This is an uncharacterized protein from Mycobacterium bovis (strain ATCC BAA-935 / AF2122/97).